The sequence spans 93 residues: Phosphoribosyl-ATP pyrophosphatase (93 aa).

It belongs to the PRA-PH family.

It localises to the cytoplasm. The catalysed reaction is 1-(5-phospho-beta-D-ribosyl)-ATP + H2O = 1-(5-phospho-beta-D-ribosyl)-5'-AMP + diphosphate + H(+). It participates in amino-acid biosynthesis; L-histidine biosynthesis; L-histidine from 5-phospho-alpha-D-ribose 1-diphosphate: step 2/9. This Mycobacterium leprae (strain Br4923) protein is Phosphoribosyl-ATP pyrophosphatase.